The chain runs to 252 residues: Small ribosomal subunit protein uS3 (252 aa).

The 73-residue stretch at 39 to 111 (IRKLINNFTK…DVNLNVLEVK (73 aa)) folds into the KH type-2 domain. The segment at 222-252 (KPFASQSSNTPNRRPRNFKGGNNNHVNAKKN) is disordered. A compositionally biased stretch (polar residues) spans 241-252 (GGNNNHVNAKKN).

It belongs to the universal ribosomal protein uS3 family. As to quaternary structure, part of the 30S ribosomal subunit. Forms a tight complex with proteins S10 and S14.

In terms of biological role, binds the lower part of the 30S subunit head. Binds mRNA in the 70S ribosome, positioning it for translation. The protein is Small ribosomal subunit protein uS3 of Onion yellows phytoplasma (strain OY-M).